The primary structure comprises 945 residues: Leucine--tRNA ligase (945 aa).

A 'HIGH' region motif is present at residues 43–53; that stretch reads PYPNGAIHIGH. The 'KMSKS' region motif lies at 638 to 642; sequence KMSKS. Lys-641 contributes to the ATP binding site.

This sequence belongs to the class-I aminoacyl-tRNA synthetase family.

The protein resides in the cytoplasm. The catalysed reaction is tRNA(Leu) + L-leucine + ATP = L-leucyl-tRNA(Leu) + AMP + diphosphate. The polypeptide is Leucine--tRNA ligase (Pyrobaculum aerophilum (strain ATCC 51768 / DSM 7523 / JCM 9630 / CIP 104966 / NBRC 100827 / IM2)).